Consider the following 159-residue polypeptide: Protein-export protein SecB (159 aa).

It belongs to the SecB family. As to quaternary structure, homotetramer, a dimer of dimers. One homotetramer interacts with 1 SecA dimer.

The protein localises to the cytoplasm. One of the proteins required for the normal export of preproteins out of the cell cytoplasm. It is a molecular chaperone that binds to a subset of precursor proteins, maintaining them in a translocation-competent state. It also specifically binds to its receptor SecA. The polypeptide is Protein-export protein SecB (Marinomonas sp. (strain MWYL1)).